A 242-amino-acid polypeptide reads, in one-letter code: Uridylate kinase (242 aa).

An ATP-binding site is contributed by 15–18 (KLSG). An involved in allosteric activation by GTP region spans residues 23–28 (GDEGFG). G57 contributes to the UMP binding site. G58 and R62 together coordinate ATP. UMP contacts are provided by residues D77 and 138-145 (TGNPFCTT). The ATP site is built by T165, Y171, and D174.

It belongs to the UMP kinase family. In terms of assembly, homohexamer.

Its subcellular location is the cytoplasm. The catalysed reaction is UMP + ATP = UDP + ADP. It functions in the pathway pyrimidine metabolism; CTP biosynthesis via de novo pathway; UDP from UMP (UMPK route): step 1/1. Its activity is regulated as follows. Allosterically activated by GTP. Inhibited by UTP. Catalyzes the reversible phosphorylation of UMP to UDP. The polypeptide is Uridylate kinase (Shewanella sp. (strain ANA-3)).